The sequence spans 728 residues: Double-strand break repair protein mre-11 (728 aa).

Acidic residues predominate over residues 1–12 (MCGSDDSFDDFV). A disordered region spans residues 1–45 (MCGSDDSFDDFVPDSQEPASSRTRNQDHLDDDEVPCSQRPDAAND). Positions 73, 75, 113, and 181 each coordinate Mn(2+). The active-site Proton donor is H182. Positions 269, 301, and 303 each coordinate Mn(2+). Residues 601–728 (KNPVADVEME…PSKKRDLSFF (128 aa)) form a disordered region. Acidic residues predominate over residues 607–616 (VEMEEDEDDP). Positions 622 to 632 (PQSTSRTNYAS) are enriched in polar residues. The span at 634–645 (SEDEVANSDEEM) shows a compositional bias: acidic residues.

Belongs to the MRE11/RAD32 family. As to quaternary structure, component of the MRN complex composed of two heterodimers rad-50 and mre-11 associated with a single nbs-1. It depends on Mn(2+) as a cofactor.

It is found in the nucleus. The protein localises to the chromosome. Functionally, core component of the MRN complex, which plays a central role in double-strand break (DSB) repair, DNA recombination, maintenance of telomere integrity and meiosis. The MRN complex is involved in the repair of DNA double-strand breaks (DSBs) via homologous recombination (HR), an error-free mechanism which primarily occurs during S and G2 phases. The complex (1) mediates the end resection of damaged DNA, which generates proper single-stranded DNA, a key initial steps in HR, and is (2) required for the recruitment of other repair factors and efficient activation of ATM and ATR upon DNA damage. Within the MRN complex, mre-11 possesses both single-strand endonuclease activity and double-strand-specific 3'-5' exonuclease activity. Mre-11 first endonucleolytically cleaves the 5' strand at DNA DSB ends to prevent non-homologous end joining (NHEJ) and licence HR. It then generates a single-stranded DNA gap via 3' to 5' exonucleolytic degradation, which is required for single-strand invasion and recombination. Required for meiotic crossing over and chiasma formation. Pachytene morphology and homolog pairing are normal. Vital in long term for maintenance of reproductive capacity of subsequent generations. The polypeptide is Double-strand break repair protein mre-11 (Caenorhabditis elegans).